Consider the following 283-residue polypeptide: Bifunctional protein FolD (283 aa).

Residues 164-166 (GRS), S189, and I230 contribute to the NADP(+) site.

Belongs to the tetrahydrofolate dehydrogenase/cyclohydrolase family. As to quaternary structure, homodimer.

It catalyses the reaction (6R)-5,10-methylene-5,6,7,8-tetrahydrofolate + NADP(+) = (6R)-5,10-methenyltetrahydrofolate + NADPH. The catalysed reaction is (6R)-5,10-methenyltetrahydrofolate + H2O = (6R)-10-formyltetrahydrofolate + H(+). It functions in the pathway one-carbon metabolism; tetrahydrofolate interconversion. Catalyzes the oxidation of 5,10-methylenetetrahydrofolate to 5,10-methenyltetrahydrofolate and then the hydrolysis of 5,10-methenyltetrahydrofolate to 10-formyltetrahydrofolate. The polypeptide is Bifunctional protein FolD (Lactobacillus delbrueckii subsp. bulgaricus (strain ATCC 11842 / DSM 20081 / BCRC 10696 / JCM 1002 / NBRC 13953 / NCIMB 11778 / NCTC 12712 / WDCM 00102 / Lb 14)).